The chain runs to 662 residues: MKTPSLTGPVFFTTPKFARLRFAFKLSFAIVLSLFLGFHLQLETPRWSVLTAAIVAAGPAFAAGGEPFSGAIRHRGMLRVVGTFIGCIGALIIIIATVRAPVVMLMLCCIWAGLCTWVSSLVKVENAYVFGLAGYTTLIIIVSTQGTPLLTPQFAVERCSEIVLGIVCAILADLLFSPRSIKQDVDRSMGELLVDQYRLLQLSMSGAEKETIDAAWHALVRKTTALSGMRSSLMLESSRWQNSNRRLTSLHTQSLTMITQACETYLVLQDAPTPVKSSLKLVLDQPVESFRDVHCRVKALRHLIAADSRDVPPTLVSWVGAATRYLLLAKGVQTNGRITTIEADVLNSEVEIKAPSAETHHAMINGLRTGVATALGCLFWLSTGWTSGSVCMVMIAVVTSLAMRLPNPQMMAKDFLFGTIYALPLGALMFMFIMPSTQQSMLLLCLSLGAMAFFLGLEVQKRRLGSLGALASTINILVLDNPMTFHISQFLDSAIGQIIGCFLALMVILLIRDNTKAHTGRTLLNRFVYGAVSALTTNTTRRKENHLPALYQQLFLLLNRFPDDIAKYRLALWLIIMHQRLRTLDIPQNAALSAFHRQIRATAEQVILARRDTTRSRYFTQLLGELERYQQMLTEQQLPASVTAPVGRLTGILRDYQHALSN.

The next 11 membrane-spanning stretches (helical) occupy residues 22-42 (FAFK…HLQL), 52-72 (AAIV…SGAI), 76-96 (GMLR…IIIA), 102-122 (VVML…SSLV), 129-149 (VFGL…GTPL), 161-181 (EIVL…PRSI), 378-398 (LFWL…IAVV), 415-435 (FLFG…FIMP), 439-459 (QSML…GLEV), 467-487 (LGAL…TFHI), and 491-511 (LDSA…ILLI).

It belongs to the aromatic acid exporter ArAE (TC 2.A.85) family.

It localises to the cell inner membrane. In terms of biological role, forms an efflux pump with AaeA. Could function as a metabolic relief valve, allowing to eliminate certain compounds when they accumulate to high levels in the cell. This Pectobacterium carotovorum subsp. carotovorum (strain PC1) protein is p-hydroxybenzoic acid efflux pump subunit AaeB.